Reading from the N-terminus, the 393-residue chain is MKYLIGIIGLIVFLGLAWIASSGKKRIKIRPIVVMLILQFILGYILLNTGIGNFLVGGFAKGFGYLLEYAAEGINFVFGGLVNADQTTFFMNVLLPIVFISALIGILQKWKVLPFIIRYIGLALSKVNGMGRLESYNAVASAILGQSEVFISLKKELGLLNQQRLYTLCASAMSTVSMSIVGAYMTMLKPEYVVTALVLNLFGGFIIASIINPYEVAKEEDMLRVEEEEKQSFFEVLGEYILDGFKVAVVVAAMLIGFVAIIALINGIFNAVFGISFQGILGYVFAPFAFLVGIPWNEAVNAGSIMATKMVSNEFVAMTSLTQNGFHFSGRTTAIVSVFLVSFANFSSIGIIAGAVKGLNEKQGNVVARFGLKLLYGATLVSFLSAAIVGLIY.

Transmembrane regions (helical) follow at residues 3–23 (YLIGIIGLIVFLGLAWIASSG), 32–52 (IVVMLILQFILGYILLNTGIG), 87–107 (TTFFMNVLLPIVFISALIGIL), 168–188 (LCASAMSTVSMSIVGAYMTML), 191–211 (EYVVTALVLNLFGGFIIASII), 249–269 (VVVAAMLIGFVAIIALINGIF), 272–292 (VFGISFQGILGYVFAPFAFLV), 334–354 (AIVSVFLVSFANFSSIGIIAG), and 372–392 (LKLLYGATLVSFLSAAIVGLI).

This sequence belongs to the concentrative nucleoside transporter (CNT) (TC 2.A.41) family.

The protein resides in the cell membrane. Functionally, transport of the pyrimidine nucleoside uridine. The polypeptide is Nucleoside permease NupC (Bacillus subtilis (strain 168)).